Here is a 97-residue protein sequence, read N- to C-terminus: Large ribosomal subunit protein bL28 (97 aa).

The protein belongs to the bacterial ribosomal protein bL28 family.

The chain is Large ribosomal subunit protein bL28 from Rickettsia canadensis (strain McKiel).